Consider the following 115-residue polypeptide: U3-lycotoxin-Ls1a (115 aa).

The N-terminal stretch at 1-20 is a signal peptide; sequence MKFVLLFGVLLVTFFSYSSA. Positions 21-44 are excised as a propeptide; the sequence is EMLDDFDQADEDELLSLIEKGEAR. 4 disulfide bridges follow: Cys48–Cys63, Cys55–Cys72, Cys62–Cys87, and Cys74–Cys85.

Belongs to the neurotoxin 19 (CSTX) family. 01 subfamily. Expressed by the venom gland.

The protein localises to the secreted. The chain is U3-lycotoxin-Ls1a from Lycosa singoriensis (Wolf spider).